The sequence spans 166 residues: Replication gene B protein (166 aa).

Its function is as follows. Required for lagging strand synthesis. Might interact with the host dnaB protein. This Escherichia phage P2 (Bacteriophage P2) protein is Replication gene B protein (B).